The following is a 104-amino-acid chain: Nucleoid-associated protein Ccon26_18480 (104 aa).

Positions 16–34 (DVQKQAKQMEEESKNKEFG) are enriched in basic and acidic residues. The disordered stretch occupies residues 16–38 (DVQKQAKQMEEESKNKEFGAKSG).

This sequence belongs to the YbaB/EbfC family. In terms of assembly, homodimer.

The protein resides in the cytoplasm. It is found in the nucleoid. Functionally, binds to DNA and alters its conformation. May be involved in regulation of gene expression, nucleoid organization and DNA protection. The sequence is that of Nucleoid-associated protein Ccon26_18480 from Campylobacter concisus (strain 13826).